The following is a 129-amino-acid chain: MAKEAARVRRRERKNISSGVAHVNSTFNNTMITITDAQGNSIAWSSAGAQGFKGSRKSTPFAAQMAAEDVAKKAQEHGMRMLEVEVCGPGSGRESALRALQAAGFTITSIRDVTPIPHNGCRPRKKRRV.

This sequence belongs to the universal ribosomal protein uS11 family. As to quaternary structure, part of the 30S ribosomal subunit. Interacts with proteins S7 and S18. Binds to IF-3.

Its function is as follows. Located on the platform of the 30S subunit, it bridges several disparate RNA helices of the 16S rRNA. Forms part of the Shine-Dalgarno cleft in the 70S ribosome. This Mesorhizobium japonicum (strain LMG 29417 / CECT 9101 / MAFF 303099) (Mesorhizobium loti (strain MAFF 303099)) protein is Small ribosomal subunit protein uS11.